A 1807-amino-acid chain; its full sequence is Vitellogenin-2 (1807 aa).

Positions 1–16 (MWFPVTLLFLAGVAVA) are cleaved as a signal peptide. One can recognise a Vitellogenin domain in the interval 24–819 (WETGNEYQYS…LIPKYVYVGV (796 aa)). An intrachain disulfide couples Cys180 to Cys224. The tract at residues 334-402 (SDSDNRRVRH…SSSSSSEEEN (69 aa)) is disordered. Low complexity predominate over residues 346 to 397 (VSQNSEQENSSESSKSSSQSSSSSSSASSSSSSSSSSSSSSSSSSSSSSSSS). Residues Asn354, Asn579, Asn635, Asn1181, Asn1304, Asn1373, and Asn1506 are each glycosylated (N-linked (GlcNAc...) asparagine). Residues 1448-1636 (QSCTLDKDKV…TYAMTQENCQ (189 aa)) form the VWFD domain. 2 disulfides stabilise this stretch: Cys1450–Cys1599 and Cys1472–Cys1635. 2 disordered regions span residues 1635–1655 (CQGP…HEFP) and 1684–1723 (NRNK…KKHN). An N-linked (GlcNAc...) asparagine glycan is attached at Asn1693. Polar residues predominate over residues 1700 to 1714 (KKQYQANSQESGSSE).

It localises to the secreted. In terms of biological role, precursor of the egg-yolk proteins that are sources of nutrients during embryonic development. The polypeptide is Vitellogenin-2 (Solenopsis invicta (Red imported fire ant)).